The primary structure comprises 635 residues: MSQVLTPLLDRVCFPQDLRALPESYLVQLANELRTETIDAVSVTGGHLGAGLGVVELTVALHYIFNTPEDRIIWDVGHQTYPHKILTGRREKIRTLRQEGGLSGFTKRVESVYDPFGAGHSSTSISAGLGMAVASALKEEKKRKVIAVIGDGAMSAGMAYEAMNNAGALNARLIVILNDNDMSIAPPTGSMSAHLARLVSRPSYRHLRERVKMLSEKLPKFFWDKARRSEEFARGLLVGGTLFDELGFYYVGPIDGHNLGHLLPVLKNVREYPHGPVLVHVVTHKGKGYPPAEASSDKYHGVNRFDVTTGKQVKASSNILPYTKVFSKALVEEACHDDKIVGITAAMPTGTGLDSFAEKFPEKMFDVGIAEQHAVTFAAGLACEGYKPFVAIYSTFLQRAYDQIIHDVSIQKLPVRFAIDRAGFVGADGATHAGSFDIVFLATLPEFVVMAPSDELELMHMVRTAAAYDQGPISFRYPRGEGIGIDLPQRGEILEIGKGRVLREGNRIALVCFGTRMSEVLRAADRLGAKGLSTTVADARFAKPLDKDLMRRLAREHEVLVTIEEGAIGGFGAHLLQFLAQEGLLEHGLKVRTLKFPDEYLNHGSPEKVLSTIGLDAMGIVNTVLTVVGREIRME.

Thiamine diphosphate-binding positions include histidine 78 and 119 to 121 (GHS). Aspartate 151 is a Mg(2+) binding site. Residues 152–153 (GA), asparagine 180, tyrosine 289, and glutamate 371 contribute to the thiamine diphosphate site. Asparagine 180 is a Mg(2+) binding site.

This sequence belongs to the transketolase family. DXPS subfamily. As to quaternary structure, homodimer. The cofactor is Mg(2+). Requires thiamine diphosphate as cofactor.

The catalysed reaction is D-glyceraldehyde 3-phosphate + pyruvate + H(+) = 1-deoxy-D-xylulose 5-phosphate + CO2. The protein operates within metabolic intermediate biosynthesis; 1-deoxy-D-xylulose 5-phosphate biosynthesis; 1-deoxy-D-xylulose 5-phosphate from D-glyceraldehyde 3-phosphate and pyruvate: step 1/1. Its function is as follows. Catalyzes the acyloin condensation reaction between C atoms 2 and 3 of pyruvate and glyceraldehyde 3-phosphate to yield 1-deoxy-D-xylulose-5-phosphate (DXP). The polypeptide is 1-deoxy-D-xylulose-5-phosphate synthase (Bartonella tribocorum (strain CIP 105476 / IBS 506)).